Consider the following 842-residue polypeptide: Protein translocase subunit SecA (842 aa).

ATP is bound by residues glutamine 91, glycine 109–threonine 113, and aspartate 498. The segment covering glutamine 798 to arginine 824 has biased composition (basic and acidic residues). A disordered region spans residues glutamine 798 to proline 827. 4 residues coordinate Zn(2+): cysteine 828, cysteine 830, cysteine 839, and cysteine 840.

The protein belongs to the SecA family. Monomer and homodimer. Part of the essential Sec protein translocation apparatus which comprises SecA, SecYEG and auxiliary proteins SecDF. Other proteins may also be involved. Requires Zn(2+) as cofactor.

It localises to the cell membrane. The protein localises to the cytoplasm. The catalysed reaction is ATP + H2O + cellular proteinSide 1 = ADP + phosphate + cellular proteinSide 2.. In terms of biological role, part of the Sec protein translocase complex. Interacts with the SecYEG preprotein conducting channel. Has a central role in coupling the hydrolysis of ATP to the transfer of proteins into and across the cell membrane, serving as an ATP-driven molecular motor driving the stepwise translocation of polypeptide chains across the membrane. This is Protein translocase subunit SecA from Staphylococcus carnosus (strain TM300).